A 204-amino-acid polypeptide reads, in one-letter code: Tumor protein D53 (204 aa).

The interval 1-31 is disordered; sequence MEAQAQGLLETEPLQGRDGDAVGSADFSSML. A coiled-coil region spans residues 22–73; it reads VGSADFSSMLSEEEKEELKAELIQLEDEITTLRQVLSAKERHLVEIKQKLGM. Phosphoserine is present on residues Ser29, Ser86, Ser122, and Ser131. Residue Arg133 is modified to Omega-N-methylarginine. Phosphothreonine is present on Thr146. 2 positions are modified to phosphoserine: Ser149 and Ser174. A disordered region spans residues 164–204; the sequence is KVGGTNHGGGSFEEVLNSTAHASSQNASAGSRQTKDEELQC. The segment covering 179-195 has biased composition (polar residues); sequence LNSTAHASSQNASAGSR.

The protein belongs to the TPD52 family. As to quaternary structure, forms a homodimer or heterodimer with other members of the family.

The polypeptide is Tumor protein D53 (Tpd52l1) (Mus musculus (Mouse)).